The sequence spans 104 residues: N(4)-acetylcytidine amidohydrolase (104 aa).

The 97-residue stretch at 6–102 (TFYTRFQQDI…ELYVIAFKKV (97 aa)) folds into the ASCH domain. The active-site Proton acceptor is K20. T23 (nucleophile) is an active-site residue. The Proton donor role is filled by E73.

It belongs to the N(4)-acetylcytidine amidohydrolase family.

It catalyses the reaction N(4)-acetylcytidine + H2O = cytidine + acetate + H(+). The catalysed reaction is N(4)-acetyl-2'-deoxycytidine + H2O = 2'-deoxycytidine + acetate + H(+). It carries out the reaction N(4)-acetylcytosine + H2O = cytosine + acetate + H(+). Its function is as follows. Catalyzes the hydrolysis of N(4)-acetylcytidine (ac4C). This chain is N(4)-acetylcytidine amidohydrolase, found in Cronobacter sakazakii (strain ATCC BAA-894) (Enterobacter sakazakii).